Reading from the N-terminus, the 369-residue chain is Protein-glutamate methylesterase/protein-glutamine glutaminase (369 aa).

The Response regulatory domain occupies 6-122; the sequence is RAVVADDSHF…SMEMSRLKDQ (117 aa). Asp56 carries the post-translational modification 4-aspartylphosphate. Residues 136-178 form a disordered region; the sequence is GATGSRSGTGSDSGTAPTTAGGSATDRRGTGGSSGQTTYVANP. Residues 138–159 are compositionally biased toward low complexity; that stretch reads TGSRSGTGSDSGTAPTTAGGSA. One can recognise a CheB-type methylesterase domain in the interval 173 to 367; that stretch reads TYVANPTLVI…DGVIDTITTE (195 aa). Active-site residues include Ser185, His212, and Asp309.

Belongs to the CheB family. In terms of processing, phosphorylated by CheA. Phosphorylation of the N-terminal regulatory domain activates the methylesterase activity.

Its subcellular location is the cytoplasm. The enzyme catalyses [protein]-L-glutamate 5-O-methyl ester + H2O = L-glutamyl-[protein] + methanol + H(+). It carries out the reaction L-glutaminyl-[protein] + H2O = L-glutamyl-[protein] + NH4(+). In terms of biological role, involved in chemotaxis. Part of a chemotaxis signal transduction system that modulates chemotaxis in response to various stimuli. Catalyzes the demethylation of specific methylglutamate residues introduced into the chemoreceptors (methyl-accepting chemotaxis proteins or MCP) by CheR. Also mediates the irreversible deamidation of specific glutamine residues to glutamic acid. In Haloarcula marismortui (strain ATCC 43049 / DSM 3752 / JCM 8966 / VKM B-1809) (Halobacterium marismortui), this protein is Protein-glutamate methylesterase/protein-glutamine glutaminase.